Here is a 358-residue protein sequence, read N- to C-terminus: Core-capsid bridging protein (358 aa).

Residues 296-331 (PSITPTPGYRGTTFKPSRTRSTRRRRSVRRRSRRTA) form a disordered region. Basic residues predominate over residues 312–329 (SRTRSTRRRRSVRRRSRR).

This sequence belongs to the adenoviridae core-capsid bridging protein family. As to quaternary structure, monomer. Homodimer. Exists in equilibrium between monomers and dimers in solution. Interacts with the histone-like nucleoprotein; this interactions bridge the virus core to the capsid. Interacts with core protein X; this interactions bridge the virus core to the capsid. Interacts with the endosome lysis protein VI; this interactions bridge the virus core to the capsid. Interacts with the peripentonal hexons. Interacts with host NPM1; this interaction might play a role in virus assembly.

It is found in the virion. The protein resides in the host nucleus. It localises to the host nucleolus. In terms of biological role, associates loosely with the viral DNA to form an outer shell around the nucleoprotein-DNA complex and links it with the capsid by binding the endosome lysis protein. Dissociates from the viral genome during entry. Might be involved in nuclear capsid assembly of the viral particles through its association with NPM1/nucleophosmin. The polypeptide is Core-capsid bridging protein (Human adenovirus F serotype 40 (HAdV-40)).